We begin with the raw amino-acid sequence, 206 residues long: Charged multivesicular body protein 2a homolog 1 (206 aa).

The disordered stretch occupies residues 1–32 (MSFFGGNKKTPEQELKDSKRELSKGQREMDRE). Basic and acidic residues predominate over residues 9–32 (KTPEQELKDSKRELSKGQREMDRE). 2 coiled-coil regions span residues 12–80 (EQEL…RATK) and 114–148 (NKQT…DMFE).

The protein belongs to the SNF7 family. In terms of assembly, probable core component of the endosomal sorting required for transport complex III (ESCRT-III). ESCRT-III components are thought to multimerize to form a flat lattice on the perimeter membrane of the endosome.

It is found in the endosome membrane. Probable core component of the endosomal sorting required for transport complex III (ESCRT-III) which is involved in multivesicular bodies (MVBs) formation and sorting of endosomal cargo proteins into MVBs. MVBs contain intraluminal vesicles (ILVs) that are generated by invagination and scission from the limiting membrane of the endosome and are delivered to lysosomes enabling degradation of membrane proteins. The polypeptide is Charged multivesicular body protein 2a homolog 1 (chmp2a1) (Dictyostelium discoideum (Social amoeba)).